The primary structure comprises 267 residues: Diphthine--ammonia ligase (267 aa).

Y97 carries the post-translational modification Phosphotyrosine.

The protein belongs to the Diphthine--ammonia ligase family.

The enzyme catalyses diphthine-[translation elongation factor 2] + NH4(+) + ATP = diphthamide-[translation elongation factor 2] + AMP + diphosphate + H(+). It functions in the pathway protein modification; peptidyl-diphthamide biosynthesis. Amidase that catalyzes the last step of diphthamide biosynthesis using ammonium and ATP. Diphthamide biosynthesis consists in the conversion of an L-histidine residue in the translation elongation factor 2 (EEF2) to diphthamide. This chain is Diphthine--ammonia ligase (Dph6), found in Mus musculus (Mouse).